A 373-amino-acid chain; its full sequence is Putative protein YfkA (373 aa).

Residues 26 to 256 (YGDMQLTNVE…DIRDENTWML (231 aa)) form the Radical SAM core domain. [4Fe-4S] cluster is bound by residues C42, C46, and C49.

The protein belongs to the radical SAM superfamily. [4Fe-4S] cluster is required as a cofactor.

This chain is Putative protein YfkA (yfkA), found in Bacillus subtilis (strain 168).